Consider the following 327-residue polypeptide: Auxin-responsive protein IAA18 (327 aa).

Disordered stretches follow at residues Val26–Lys45, Gly52–Thr98, and Asn180–Ala202. The EAR-like (transcriptional repression) motif lies at Leu49–Leu53. The segment covering Gln58–Ile69 has biased composition (basic and acidic residues). The segment covering Gln70 to Ile82 has biased composition (low complexity). Over residues Asn180–Gln189 the composition is skewed to polar residues. Residues Ser190 to Ala202 show a composition bias toward basic and acidic residues. Residues Arg209 to Arg313 form the PB1 domain.

The protein belongs to the Aux/IAA family. Homodimers and heterodimers. As to expression, highly expressed in flowers. Expressed in roots and etiolated seedlings.

The protein resides in the nucleus. In terms of biological role, aux/IAA proteins are short-lived transcriptional factors that function as repressors of early auxin response genes at low auxin concentrations. This chain is Auxin-responsive protein IAA18 (IAA18), found in Oryza sativa subsp. japonica (Rice).